A 333-amino-acid polypeptide reads, in one-letter code: Mevalonate kinase (333 aa).

109-119 (PVGAGLGSSAA) provides a ligand contact to ATP. The Proton acceptor role is filled by D160.

The protein belongs to the GHMP kinase family. Mevalonate kinase subfamily. Homodimer. Mg(2+) serves as cofactor.

The protein resides in the cytoplasm. The enzyme catalyses (R)-mevalonate + ATP = (R)-5-phosphomevalonate + ADP + H(+). The protein operates within isoprenoid biosynthesis; isopentenyl diphosphate biosynthesis via mevalonate pathway; isopentenyl diphosphate from (R)-mevalonate: step 1/3. Its function is as follows. Catalyzes the phosphorylation of (R)-mevalonate (MVA) to (R)-mevalonate 5-phosphate (MVAP). Functions in the mevalonate (MVA) pathway leading to isopentenyl diphosphate (IPP), a key precursor for the biosynthesis of isoprenoid compounds such as archaeal membrane lipids. The chain is Mevalonate kinase from Thermococcus sibiricus (strain DSM 12597 / MM 739).